The sequence spans 190 residues: dCTP deaminase, dUMP-forming (190 aa).

Residues 101-106 (KSSLGR), Asp119, 127-129 (TLE), Gln148, Tyr162, and Gln174 each bind dCTP. The active-site Proton donor/acceptor is Glu129. The interval 161 to 190 (PYGSSSVGSKYQGQRGPTPSRSYQNFVKND) is disordered. Positions 163–190 (GSSSVGSKYQGQRGPTPSRSYQNFVKND) are enriched in polar residues.

This sequence belongs to the dCTP deaminase family. Homotrimer.

The enzyme catalyses dCTP + 2 H2O = dUMP + NH4(+) + diphosphate. Its pathway is pyrimidine metabolism; dUMP biosynthesis; dUMP from dCTP: step 1/1. In terms of biological role, bifunctional enzyme that catalyzes both the deamination of dCTP to dUTP and the hydrolysis of dUTP to dUMP without releasing the toxic dUTP intermediate. This is dCTP deaminase, dUMP-forming from Mycolicibacterium vanbaalenii (strain DSM 7251 / JCM 13017 / BCRC 16820 / KCTC 9966 / NRRL B-24157 / PYR-1) (Mycobacterium vanbaalenii).